Here is a 341-residue protein sequence, read N- to C-terminus: UDP-N-acetylenolpyruvoylglucosamine reductase (341 aa).

One can recognise an FAD-binding PCMH-type domain in the interval 13 to 185; sequence FGVEQSCLSM…TAVGLRLPKA (173 aa). Arg-161 is an active-site residue. Ser-231 serves as the catalytic Proton donor. The active site involves Glu-327.

It belongs to the MurB family. It depends on FAD as a cofactor.

The protein resides in the cytoplasm. It carries out the reaction UDP-N-acetyl-alpha-D-muramate + NADP(+) = UDP-N-acetyl-3-O-(1-carboxyvinyl)-alpha-D-glucosamine + NADPH + H(+). The protein operates within cell wall biogenesis; peptidoglycan biosynthesis. Functionally, cell wall formation. The protein is UDP-N-acetylenolpyruvoylglucosamine reductase of Shewanella sp. (strain MR-7).